Here is a 134-residue protein sequence, read N- to C-terminus: Large ribosomal subunit protein uL24 (134 aa).

The protein belongs to the universal ribosomal protein uL24 family. As to quaternary structure, part of the 50S ribosomal subunit.

Its function is as follows. One of two assembly initiator proteins, it binds directly to the 5'-end of the 23S rRNA, where it nucleates assembly of the 50S subunit. Functionally, located at the polypeptide exit tunnel on the outside of the subunit. This Sulfolobus acidocaldarius (strain ATCC 33909 / DSM 639 / JCM 8929 / NBRC 15157 / NCIMB 11770) protein is Large ribosomal subunit protein uL24.